Reading from the N-terminus, the 606-residue chain is Aspartate--tRNA(Asp/Asn) ligase (606 aa).

E177 contacts L-aspartate. Residues 201-204 are aspartate; sequence QLFK. R223 serves as a coordination point for L-aspartate. ATP-binding positions include 223–225 and Q232; that span reads RDE. H461 contributes to the L-aspartate binding site. E499 contacts ATP. R506 is a binding site for L-aspartate. 551 to 554 is an ATP binding site; that stretch reads GLDR.

Belongs to the class-II aminoacyl-tRNA synthetase family. Type 1 subfamily. As to quaternary structure, homodimer.

The protein resides in the cytoplasm. It catalyses the reaction tRNA(Asx) + L-aspartate + ATP = L-aspartyl-tRNA(Asx) + AMP + diphosphate. Its function is as follows. Aspartyl-tRNA synthetase with relaxed tRNA specificity since it is able to aspartylate not only its cognate tRNA(Asp) but also tRNA(Asn). Reaction proceeds in two steps: L-aspartate is first activated by ATP to form Asp-AMP and then transferred to the acceptor end of tRNA(Asp/Asn). This Prochlorococcus marinus (strain NATL2A) protein is Aspartate--tRNA(Asp/Asn) ligase.